A 171-amino-acid chain; its full sequence is Large ribosomal subunit protein uL10 (171 aa).

Belongs to the universal ribosomal protein uL10 family. Part of the ribosomal stalk of the 50S ribosomal subunit. The N-terminus interacts with L11 and the large rRNA to form the base of the stalk. The C-terminus forms an elongated spine to which L12 dimers bind in a sequential fashion forming a multimeric L10(L12)X complex.

Its function is as follows. Forms part of the ribosomal stalk, playing a central role in the interaction of the ribosome with GTP-bound translation factors. This chain is Large ribosomal subunit protein uL10 (rplJ), found in Lactococcus lactis subsp. lactis (strain IL1403) (Streptococcus lactis).